Here is a 134-residue protein sequence, read N- to C-terminus: MFADISAQHWAFAIYVIGAIAICLTMIGLAALLGGRAQGRTKNKPFESGVDSVGTARLRFSAKFYLVAMFFVIFDVEALYLFAWSVSVRESGWVGFIEATIFIGLLLIGLVYLWRIGALEWSPRKPQLNNKNTD.

3 helical membrane passes run 12–32, 64–84, and 93–113; these read FAIY…LAAL, FYLV…LFAW, and WVGF…LVYL.

It belongs to the complex I subunit 3 family. In terms of assembly, NDH-1 is composed of 13 different subunits. Subunits NuoA, H, J, K, L, M, N constitute the membrane sector of the complex.

The protein localises to the cell inner membrane. It catalyses the reaction a quinone + NADH + 5 H(+)(in) = a quinol + NAD(+) + 4 H(+)(out). Functionally, NDH-1 shuttles electrons from NADH, via FMN and iron-sulfur (Fe-S) centers, to quinones in the respiratory chain. The immediate electron acceptor for the enzyme in this species is believed to be ubiquinone. Couples the redox reaction to proton translocation (for every two electrons transferred, four hydrogen ions are translocated across the cytoplasmic membrane), and thus conserves the redox energy in a proton gradient. The polypeptide is NADH-quinone oxidoreductase subunit A (Shewanella oneidensis (strain ATCC 700550 / JCM 31522 / CIP 106686 / LMG 19005 / NCIMB 14063 / MR-1)).